A 132-amino-acid chain; its full sequence is UPF0060 membrane protein SG1469 (132 aa).

3 helical membrane-spanning segments follow: residues 5–25 (VLLYIATAVAAILGCYLPYCY), 32–52 (LLLIPAALSLIAFVGLLVLYP), and 60–80 (AAYGGVYILTAFLWLRFIDGI).

It belongs to the UPF0060 family.

It localises to the cell inner membrane. The protein is UPF0060 membrane protein SG1469 of Sodalis glossinidius (strain morsitans).